A 162-amino-acid polypeptide reads, in one-letter code: Caveolin-2 (162 aa).

Over 1 to 86 the chain is Cytoplasmic; sequence MGLETEKADV…FEISKYVIYK (86 aa). Tyrosine 19 carries the phosphotyrosine; by SRC modification. A phosphoserine mark is found at serine 20 and serine 23. Position 27 is a phosphotyrosine; by SRC (tyrosine 27). Serine 36 bears the Phosphoserine mark. The segment at residues 87–107 is an intramembrane region (helical); the sequence is FLTVFLAIPLAFTAGILFATL. Residues 108–162 are Cytoplasmic-facing; that stretch reads SCLHIWIIMPFVKTCLMVLPSVQTIWRSVTDVIIAPLCTSIGRICSSVSLQVSHD.

This sequence belongs to the caveolin family. Monomer or homodimer. Interacts with CAV1; the interaction forms a stable heterooligomeric complex that is required for targeting to lipid rafts and for caveolae formation. Tyrosine phosphorylated forms do not form heterooligomers with the Tyr-19-phosphorylated form existing as a monomer or dimer, and the Tyr-27-form as a monomer only. Interacts (tyrosine phosphorylated form) with the SH2 domain-containing proteins, RASA1, NCK1 and SRC. Interacts (tyrosine phosphorylated form) with INSR, the interaction (Tyr-27-phosphorylated form) is increased on insulin stimulation. Interacts (Tyr-19 phosphorylated form) with MAPK1 (phosphorylated form); the interaction, promoted by insulin, leads to nuclear location and MAPK1 activation. Interacts with STAT3; the interaction is increased on insulin-induced tyrosine phosphorylation leading to STAT activation. Phosphorylated on serine and tyrosine residues. CAV1 promotes phosphorylation on Ser-23 which then targets the complex to the plasma membrane, lipid rafts and caveolae. Phosphorylation on Ser-36 appears to modulate mitosis in endothelial cells. Phosphorylation on both Tyr-19 and Tyr-27 is required for insulin-induced 'Ser-727' phosphorylation of STAT3 and its activation. Phosphorylation on Tyr-19 is required for insulin-induced phosphorylation of MAPK1 and DNA binding of STAT3. Tyrosine phosphorylation is induced by both EGF and insulin (By. similarity).

The protein resides in the nucleus. It is found in the cytoplasm. It localises to the golgi apparatus membrane. Its subcellular location is the cell membrane. The protein localises to the membrane. The protein resides in the caveola. Its function is as follows. May act as a scaffolding protein within caveolar membranes. Interacts directly with G-protein alpha subunits and can functionally regulate their activity. Acts as an accessory protein in conjunction with CAV1 in targeting to lipid rafts and driving caveolae formation. The Ser-36 phosphorylated form has a role in modulating mitosis in endothelial cells. Positive regulator of cellular mitogenesis of the MAPK signaling pathway. Required for the insulin-stimulated nuclear translocation and activation of MAPK1 and STAT3, and the subsequent regulation of cell cycle progression. This is Caveolin-2 (CAV2) from Atelerix albiventris (Middle-African hedgehog).